The primary structure comprises 234 residues: LexA repressor (234 aa).

The segment at residues 26-46 is a DNA-binding region (H-T-H motif); sequence FDEMKDALDLRSKSGIHRLIT. A disordered region spans residues 80–107; the sequence is RGFTPSVIEGNLGKVRPPSPQHAEDDSD. Active-site for autocatalytic cleavage activity residues include Ser155 and Lys193.

This sequence belongs to the peptidase S24 family. As to quaternary structure, homodimer.

The catalysed reaction is Hydrolysis of Ala-|-Gly bond in repressor LexA.. Functionally, represses a number of genes involved in the response to DNA damage (SOS response), including recA and lexA. In the presence of single-stranded DNA, RecA interacts with LexA causing an autocatalytic cleavage which disrupts the DNA-binding part of LexA, leading to derepression of the SOS regulon and eventually DNA repair. This Rhodopseudomonas palustris (strain HaA2) protein is LexA repressor.